The sequence spans 279 residues: Diaminopimelate epimerase (279 aa).

2 residues coordinate substrate: N13 and N66. C75 acts as the Proton donor in catalysis. Substrate is bound by residues 76–77, N164, N197, and 215–216; these read GN and ER. C224 acts as the Proton acceptor in catalysis. 225–226 is a binding site for substrate; sequence GT.

The protein belongs to the diaminopimelate epimerase family. Homodimer.

It localises to the cytoplasm. It catalyses the reaction (2S,6S)-2,6-diaminopimelate = meso-2,6-diaminopimelate. It participates in amino-acid biosynthesis; L-lysine biosynthesis via DAP pathway; DL-2,6-diaminopimelate from LL-2,6-diaminopimelate: step 1/1. In terms of biological role, catalyzes the stereoinversion of LL-2,6-diaminopimelate (L,L-DAP) to meso-diaminopimelate (meso-DAP), a precursor of L-lysine and an essential component of the bacterial peptidoglycan. The protein is Diaminopimelate epimerase of Brachyspira hyodysenteriae (strain ATCC 49526 / WA1).